The sequence spans 76 residues: UPF0291 protein BT9727_1737 (76 aa).

This sequence belongs to the UPF0291 family.

The protein localises to the cytoplasm. The polypeptide is UPF0291 protein BT9727_1737 (Bacillus thuringiensis subsp. konkukian (strain 97-27)).